We begin with the raw amino-acid sequence, 261 residues long: Auxin-responsive protein IAA10 (261 aa).

Residues 1 to 43 (MNGLQEVCSSSGSVMIGLPAEEDENAAHSSEDSSCPDESVSET) form a disordered region. The short motif at 45 to 49 (LDLAL) is the EAR-like (transcriptional repression) element. Residues 62-90 (LSSSSSSLTRESGTKRSADSSPAAASNAT) form a disordered region. Residues 80–89 (DSSPAAASNA) are compositionally biased toward low complexity. The PB1 domain occupies 151–253 (SMLVKVTMDG…SVTRLRIMKT (103 aa)).

It belongs to the Aux/IAA family. As to quaternary structure, homodimers and heterodimers. As to expression, preferentially expressed in vegetative organs.

The protein localises to the nucleus. Its function is as follows. Aux/IAA proteins are short-lived transcriptional factors that function as repressors of early auxin response genes at low auxin concentrations. Repression is thought to result from the interaction with auxin response factors (ARFs), proteins that bind to the auxin-responsive promoter element (AuxRE). Formation of heterodimers with ARF proteins may alter their ability to modulate early auxin response genes expression. The sequence is that of Auxin-responsive protein IAA10 (IAA10) from Arabidopsis thaliana (Mouse-ear cress).